We begin with the raw amino-acid sequence, 105 residues long: Large ribosomal subunit protein uL24 (105 aa).

The protein belongs to the universal ribosomal protein uL24 family. As to quaternary structure, part of the 50S ribosomal subunit.

One of two assembly initiator proteins, it binds directly to the 5'-end of the 23S rRNA, where it nucleates assembly of the 50S subunit. Functionally, one of the proteins that surrounds the polypeptide exit tunnel on the outside of the subunit. The polypeptide is Large ribosomal subunit protein uL24 (Xanthomonas oryzae pv. oryzae (strain PXO99A)).